The sequence spans 121 residues: MKKQYRIKQNEEFQYTFKKGHSFANRQLVIYYREKEDQCHFRIGLSVGKKIGNAVMRNRIKRCLRQSFHELEPDIKPAYDIVIIARNPTRNMNCGEIKKSLSHLLYKEGLLKNTRNKTSLR.

It belongs to the RnpA family. In terms of assembly, consists of a catalytic RNA component (M1 or rnpB) and a protein subunit.

It catalyses the reaction Endonucleolytic cleavage of RNA, removing 5'-extranucleotides from tRNA precursor.. Its function is as follows. RNaseP catalyzes the removal of the 5'-leader sequence from pre-tRNA to produce the mature 5'-terminus. It can also cleave other RNA substrates such as 4.5S RNA. The protein component plays an auxiliary but essential role in vivo by binding to the 5'-leader sequence and broadening the substrate specificity of the ribozyme. This Oceanobacillus iheyensis (strain DSM 14371 / CIP 107618 / JCM 11309 / KCTC 3954 / HTE831) protein is Ribonuclease P protein component.